A 372-amino-acid polypeptide reads, in one-letter code: Testis-specific serine/threonine-protein kinase 5 (372 aa).

One can recognise a Protein kinase domain in the interval 27-302; it reads LLSSKKIGSG…LQQVAAHCWM (276 aa). ATP-binding positions include 33–41 and Lys-72; that span reads IGSGAFSKV. The Proton acceptor role is filled by Asp-173. The interval 314 to 372 is disordered; it reads GAPREQDHSWSTVAPDNTEPDRDTRHARSKGSSSSSGRTSPRRPSLAQLCNTWKPAPEQ. Positions 343-358 are enriched in low complexity; that stretch reads KGSSSSSGRTSPRRPS.

This sequence belongs to the protein kinase superfamily. CAMK Ser/Thr protein kinase family. It depends on Mg(2+) as a cofactor. In terms of processing, autophosphorylated.

The enzyme catalyses L-seryl-[protein] + ATP = O-phospho-L-seryl-[protein] + ADP + H(+). It catalyses the reaction L-threonyl-[protein] + ATP = O-phospho-L-threonyl-[protein] + ADP + H(+). Activated by phosphorylation on Thr-207, potentially by autophosphorylation. Functionally, may be involved in a signaling pathway during male germ cell development or mature sperm function. In Mus musculus (Mouse), this protein is Testis-specific serine/threonine-protein kinase 5.